We begin with the raw amino-acid sequence, 571 residues long: Streptolysin O (571 aa).

Positions 1 to 33 (MSNKKTFKKYSRVAGLLTAALIIGNLVTANAES) are cleaved as a signal peptide. Positions 30–108 (NAESNKQNTA…KKSEEDHTEE (79 aa)) are disordered. A compositionally biased stretch (low complexity) spans 37–48 (NTASTETTTTNE). Basic and acidic residues-rich tracts occupy residues 50 to 68 (PKPE…KTDD) and 79 to 108 (APKE…HTEE). Transmembrane regions (beta stranded) follow at residues 260 to 273 (KSQI…NSKI), 280 to 289 (IDFKSISKGE), 358 to 367 (SNDVEAAFSA), and 375 to 387 (KTNG…LENS). Residues 529–539 (ECTGLAWEWWR) carry the Conserved undecapeptide motif. Positions 561-562 (TL) match the Cholesterol binding motif.

The protein belongs to the cholesterol-dependent cytolysin family. Homooligomeric pore complex of 35 to 50 subunits; when inserted in the host membrane.

It is found in the secreted. It localises to the host cell membrane. A cholesterol-dependent toxin that causes cytolysis by forming pores in cholesterol containing host membranes. After binding to target membranes, the protein undergoes a major conformation change, leading to its insertion in the host membrane and formation of an oligomeric pore complex. Cholesterol is required for binding to host membranes, membrane insertion and pore formation; cholesterol binding is mediated by a Thr-Leu pair in the C-terminus. Can be reversibly inactivated by oxidation. This is Streptolysin O (slo) from Streptococcus pyogenes serotype M18 (strain MGAS8232).